Reading from the N-terminus, the 107-residue chain is MDKSKRLFLKSKRSFRRRLPPIQSGDRIDYRNISLISRFISQQGKILSRRVNRLTLKQQRLITIAIKQARILSLLPFRPKAQRFKKAQRFKRRQSTARTVGLRTRNK.

The span at 85 to 95 (KKAQRFKRRQS) shows a compositional bias: basic residues. Residues 85–107 (KKAQRFKRRQSTARTVGLRTRNK) are disordered.

It belongs to the bacterial ribosomal protein bS18 family. In terms of assembly, part of the 30S ribosomal subunit.

The protein resides in the plastid. Its subcellular location is the chloroplast. This Oenothera argillicola (Appalachian evening primrose) protein is Small ribosomal subunit protein bS18c.